Consider the following 332-residue polypeptide: Biotin synthase (332 aa).

Residues His53–Arg282 form the Radical SAM core domain. The [4Fe-4S] cluster site is built by Cys71, Cys75, and Cys78. 4 residues coordinate [2Fe-2S] cluster: Cys115, Cys147, Cys207, and Arg277.

It belongs to the radical SAM superfamily. Biotin synthase family. In terms of assembly, homodimer. Requires [4Fe-4S] cluster as cofactor. [2Fe-2S] cluster serves as cofactor.

The catalysed reaction is (4R,5S)-dethiobiotin + (sulfur carrier)-SH + 2 reduced [2Fe-2S]-[ferredoxin] + 2 S-adenosyl-L-methionine = (sulfur carrier)-H + biotin + 2 5'-deoxyadenosine + 2 L-methionine + 2 oxidized [2Fe-2S]-[ferredoxin]. Its pathway is cofactor biosynthesis; biotin biosynthesis; biotin from 7,8-diaminononanoate: step 2/2. In terms of biological role, catalyzes the conversion of dethiobiotin (DTB) to biotin by the insertion of a sulfur atom into dethiobiotin via a radical-based mechanism. The polypeptide is Biotin synthase (Bacillus cereus (strain B4264)).